The chain runs to 561 residues: Methionine--tRNA ligase (561 aa).

Positions 11–21 match the 'HIGH' region motif; it reads PYVNTVPHLGN. Zn(2+) is bound by residues Cys-143, Cys-146, Cys-156, and Cys-159. ATP is bound at residue Lys-334.

It belongs to the class-I aminoacyl-tRNA synthetase family. MetG type 1 subfamily. Requires Zn(2+) as cofactor.

It is found in the cytoplasm. It catalyses the reaction tRNA(Met) + L-methionine + ATP = L-methionyl-tRNA(Met) + AMP + diphosphate. Is required not only for elongation of protein synthesis but also for the initiation of all mRNA translation through initiator tRNA(fMet) aminoacylation. The protein is Methionine--tRNA ligase of Ignicoccus hospitalis (strain KIN4/I / DSM 18386 / JCM 14125).